The chain runs to 179 residues: Interleukin-22b (179 aa).

Residues 1–33 (MAVLQKSMSFSLMGTLAASCLLLIALWAQEANA) form the signal peptide. Disulfide bonds link cysteine 40-cysteine 132 and cysteine 89-cysteine 178. N-linked (GlcNAc...) asparagine glycans are attached at residues asparagine 54, asparagine 68, and asparagine 97.

This sequence belongs to the IL-10 family.

The protein localises to the secreted. Functionally, cytokine that contributes to the inflammatory response in vivo. This chain is Interleukin-22b, found in Mus musculus (Mouse).